Reading from the N-terminus, the 445-residue chain is Glycine--tRNA ligase (445 aa).

Substrate is bound by residues arginine 97 and glutamate 145. ATP is bound by residues 177–179 (RNE), 187–192 (FRTCEF), 262–263 (EV), and 308–311 (GLTR). Residue 192–196 (FEQME) coordinates substrate. 304-308 (ETSAG) is a substrate binding site.

Belongs to the class-II aminoacyl-tRNA synthetase family. As to quaternary structure, homodimer.

It is found in the cytoplasm. The catalysed reaction is tRNA(Gly) + glycine + ATP = glycyl-tRNA(Gly) + AMP + diphosphate. Its function is as follows. Catalyzes the attachment of glycine to tRNA(Gly). In Borreliella burgdorferi (strain ATCC 35210 / DSM 4680 / CIP 102532 / B31) (Borrelia burgdorferi), this protein is Glycine--tRNA ligase.